We begin with the raw amino-acid sequence, 861 residues long: Cone cGMP-specific 3',5'-cyclic phosphodiesterase subunit alpha' (861 aa).

2 GAF domains span residues 75–224 (SAEQ…AVAL) and 256–433 (DVER…GWSL). 3',5'-cyclic GMP contacts are provided by residues Ser97, Asn116, 169–172 (DKQT), and Thr176. The region spanning 486 to 819 (EERQLLAILK…VEWKSLAEEY (334 aa)) is the PDEase domain. Catalysis depends on His562, which acts as the Proton donor. The a divalent metal cation site is built by His566, His602, Asp603, and Asp723. The span at 826 to 839 (TEEEAGKQEEEASD) shows a compositional bias: basic and acidic residues. The segment at 826–861 (TEEEAGKQEEEASDGKAATDLGGSAEDKKSKTCLML) is disordered. Cys858 is modified (cysteine methyl ester). The S-geranylgeranyl cysteine moiety is linked to residue Cys858. Residues 859-861 (LML) constitute a propeptide, removed in mature form.

Belongs to the cyclic nucleotide phosphodiesterase family. Composed of two alpha' subunits that are associated with 3 smaller proteins of 11, 13, and 15 kDa. It depends on a divalent metal cation as a cofactor.

Its subcellular location is the cell membrane. It catalyses the reaction 3',5'-cyclic GMP + H2O = GMP + H(+). Functionally, as cone-specific cGMP phosphodiesterase, it plays an essential role in light detection and cone phototransduction by rapidly decreasing intracellular levels of cGMP. This chain is Cone cGMP-specific 3',5'-cyclic phosphodiesterase subunit alpha' (Pde6c), found in Mus musculus (Mouse).